The primary structure comprises 25 residues: Large ribosomal subunit protein uL29 (25 aa).

The protein belongs to the universal ribosomal protein uL29 family.

In Brevundimonas vesicularis (Pseudomonas vesicularis), this protein is Large ribosomal subunit protein uL29 (rpmC).